The sequence spans 201 residues: ATP-dependent Clp protease proteolytic subunit (201 aa).

Ser-98 acts as the Nucleophile in catalysis. His-123 is an active-site residue.

It belongs to the peptidase S14 family. Fourteen ClpP subunits assemble into 2 heptameric rings which stack back to back to give a disk-like structure with a central cavity, resembling the structure of eukaryotic proteasomes.

It localises to the cytoplasm. It carries out the reaction Hydrolysis of proteins to small peptides in the presence of ATP and magnesium. alpha-casein is the usual test substrate. In the absence of ATP, only oligopeptides shorter than five residues are hydrolyzed (such as succinyl-Leu-Tyr-|-NHMec, and Leu-Tyr-Leu-|-Tyr-Trp, in which cleavage of the -Tyr-|-Leu- and -Tyr-|-Trp bonds also occurs).. Cleaves peptides in various proteins in a process that requires ATP hydrolysis. Has a chymotrypsin-like activity. Plays a major role in the degradation of misfolded proteins. This is ATP-dependent Clp protease proteolytic subunit from Rickettsia akari (strain Hartford).